An 89-amino-acid polypeptide reads, in one-letter code: Signal recognition particle 19 kDa protein (89 aa).

Belongs to the SRP19 family. As to quaternary structure, part of the signal recognition particle protein translocation system, which is composed of SRP and FtsY. Archaeal SRP consists of a 7S RNA molecule of 300 nucleotides and two protein subunits: SRP54 and SRP19.

The protein resides in the cytoplasm. Functionally, involved in targeting and insertion of nascent membrane proteins into the cytoplasmic membrane. Binds directly to 7S RNA and mediates binding of the 54 kDa subunit of the SRP. The polypeptide is Signal recognition particle 19 kDa protein (Methanococcus maripaludis (strain C5 / ATCC BAA-1333)).